Consider the following 620-residue polypeptide: Chaperone protein HscA homolog (620 aa).

The protein belongs to the heat shock protein 70 family.

In terms of biological role, chaperone involved in the maturation of iron-sulfur cluster-containing proteins. Has a low intrinsic ATPase activity which is markedly stimulated by HscB. This Colwellia psychrerythraea (strain 34H / ATCC BAA-681) (Vibrio psychroerythus) protein is Chaperone protein HscA homolog.